The primary structure comprises 108 residues: UPF0145 protein YjfJ (108 aa).

The protein belongs to the UPF0145 family.

In Lactococcus lactis subsp. lactis (strain IL1403) (Streptococcus lactis), this protein is UPF0145 protein YjfJ (yjfJ).